A 244-amino-acid chain; its full sequence is Orotidine 5'-phosphate decarboxylase (244 aa).

Residues Asp-20, Lys-42, 70 to 79, Thr-125, Arg-186, Gln-195, Gly-215, and Arg-216 contribute to the substrate site; that span reads DLKFFDIPAT. Lys-72 (proton donor) is an active-site residue.

Belongs to the OMP decarboxylase family. Type 1 subfamily. As to quaternary structure, homodimer.

The enzyme catalyses orotidine 5'-phosphate + H(+) = UMP + CO2. The protein operates within pyrimidine metabolism; UMP biosynthesis via de novo pathway; UMP from orotate: step 2/2. Catalyzes the decarboxylation of orotidine 5'-monophosphate (OMP) to uridine 5'-monophosphate (UMP). This Xylella fastidiosa (strain M23) protein is Orotidine 5'-phosphate decarboxylase.